The primary structure comprises 317 residues: Cytochrome c biogenesis protein CcsA (317 aa).

Helical transmembrane passes span valine 17–leucine 37, glycine 44–glycine 64, leucine 71–leucine 91, isoleucine 101–isoleucine 121, methionine 143–isoleucine 163, isoleucine 223–asparagine 243, tryptophan 252–isoleucine 272, and alanine 284–leucine 304.

It belongs to the CcmF/CycK/Ccl1/NrfE/CcsA family. May interact with Ccs1.

The protein resides in the plastid. Its subcellular location is the chloroplast thylakoid membrane. Required during biogenesis of c-type cytochromes (cytochrome c6 and cytochrome f) at the step of heme attachment. The sequence is that of Cytochrome c biogenesis protein CcsA from Pelargonium hortorum (Common geranium).